We begin with the raw amino-acid sequence, 185 residues long: Large ribosomal subunit protein bL25 (185 aa).

This sequence belongs to the bacterial ribosomal protein bL25 family. CTC subfamily. As to quaternary structure, part of the 50S ribosomal subunit; part of the 5S rRNA/L5/L18/L25 subcomplex. Contacts the 5S rRNA. Binds to the 5S rRNA independently of L5 and L18.

In terms of biological role, this is one of the proteins that binds to the 5S RNA in the ribosome where it forms part of the central protuberance. This chain is Large ribosomal subunit protein bL25, found in Chlamydia trachomatis serovar L2 (strain ATCC VR-902B / DSM 19102 / 434/Bu).